The following is a 774-amino-acid chain: Dapper homolog 2 (774 aa).

Positions 67 to 93 (PEQQLEAALAALQEQLSRLRQQDIGLK) form a coiled coil. Disordered stretches follow at residues 188 to 225 (RPQA…LDRA), 295 to 319 (TPQR…TIQT), 345 to 500 (TPAK…EKIK), and 624 to 710 (CPES…GAQS). The segment covering 438-452 (VQASPSSKAQQTPSA) has biased composition (polar residues). Low complexity predominate over residues 637–648 (RRAGGPLARGRP). Composition is skewed to basic and acidic residues over residues 655–672 (AYTR…ECDP) and 686–700 (SSDH…RESS). The short motif at 771–774 (MTMV) is the PDZ-binding element.

This sequence belongs to the dapper family. As to quaternary structure, can form homodimers and heterodimers with DACT1 or DACT3. Interacts with CSNK1D, PKA catalytic subunit, PKC-type kinase, CSNK2B, DVL1, DVL2, DVL3, VANGL1, VANGL2, TGFBR1, CTNNB1, CTNND2, CTNND1, LEF1, TCF7, TCF7L1 and HDAC1.

Its function is as follows. Involved in regulation of intracellular signaling pathways during development. Negatively regulates the Nodal signaling pathway, possibly by promoting the lysosomal degradation of Nodal receptors, such as TGFBR1. May be involved in control of the morphogenetic behavior of kidney ureteric bud cells by keeping cells epithelial and restraining their mesenchymal character. May play an inhibitory role in the re-epithelialization of skin wounds by attenuating TGF-beta signaling. This chain is Dapper homolog 2 (DACT2), found in Homo sapiens (Human).